Reading from the N-terminus, the 258-residue chain is MLAKRIIPCLDVRDGQVVKGVQFRNHEIIGDIVPLAKRYAEEGADELVFYDITASSDGRVVDKSWVSRVAEVIDIPFCVAGGIKSLDDAAKILSFGADKISINSPALADPTLITRLADRFGVQCIVVGIDTWYDGETGKYHVNQYTGDESRTRVTQWETLDWVQEVQKRGAGEIVLNMMNQDGVRNGYDLEQLKKVREVCHVPLIASGGAGTMEHFLEAFRDADVDGALAASVFHKQIINIGELKAYLATQGVEIRIC.

Residues D11 and D130 contribute to the active site.

Belongs to the HisA/HisF family. In terms of assembly, heterodimer of HisH and HisF.

The protein localises to the cytoplasm. The catalysed reaction is 5-[(5-phospho-1-deoxy-D-ribulos-1-ylimino)methylamino]-1-(5-phospho-beta-D-ribosyl)imidazole-4-carboxamide + L-glutamine = D-erythro-1-(imidazol-4-yl)glycerol 3-phosphate + 5-amino-1-(5-phospho-beta-D-ribosyl)imidazole-4-carboxamide + L-glutamate + H(+). It participates in amino-acid biosynthesis; L-histidine biosynthesis; L-histidine from 5-phospho-alpha-D-ribose 1-diphosphate: step 5/9. IGPS catalyzes the conversion of PRFAR and glutamine to IGP, AICAR and glutamate. The HisF subunit catalyzes the cyclization activity that produces IGP and AICAR from PRFAR using the ammonia provided by the HisH subunit. The sequence is that of Imidazole glycerol phosphate synthase subunit HisF from Shigella boydii serotype 18 (strain CDC 3083-94 / BS512).